The following is a 56-amino-acid chain: Alpha-conotoxin Pn1.2 (56 aa).

Positions 1 to 16 are cleaved as a signal peptide; sequence MFTVFLLVVLATTVVS. The propeptide occupies 17–39; sequence FTSDRASDGGNAAMSDLIALTIK. 2 disulfide bridges follow: cysteine 41–cysteine 47 and cysteine 42–cysteine 55. Residues 43–45 are ser-Xaa-Pro motif, crucial for potent interaction with nAChR; it reads SHP. Cysteine amide is present on cysteine 55.

This sequence belongs to the conotoxin A superfamily. In terms of processing, non-native isomers 'ribbon' (with disulfide connectivity C1-C4; C2-C3) and 'beads' (with disulfide connectivity C1-C2; C3-C4) also inhibit high voltage-activated (HVA) calcium channel currents in rat DRG neurons (20-30% inhibition at 1 uM toxin). Expressed by the venom duct.

Its subcellular location is the secreted. In terms of biological role, alpha-conotoxins act on postsynaptic membranes, they bind to the nicotinic acetylcholine receptors (nAChR) and thus inhibit them. This toxin inhibits human alpha-7/CHRNA7 and alpha-9-alpha-10/CHRNA9/CHRNA10 AChR (complete inhibition at 3 uM of toxin). In addition, this toxin inhibits high voltage-activated (HVA) calcium channel currents in rat DRG neurons (22% inhibition at 1 uM toxin) probably by activating GABA(B) receptors (GABBR1 and/or GABBR2). The polypeptide is Alpha-conotoxin Pn1.2 (Conus pennaceus (Feathered cone)).